Consider the following 511-residue polypeptide: Histidine ammonia-lyase (511 aa).

The segment at residues 142 to 144 is a cross-link (5-imidazolinone (Ala-Gly)); the sequence is ASG. Position 143 is a 2,3-didehydroalanine (Ser) (serine 143).

The protein belongs to the PAL/histidase family. Post-translationally, contains an active site 4-methylidene-imidazol-5-one (MIO), which is formed autocatalytically by cyclization and dehydration of residues Ala-Ser-Gly.

It is found in the cytoplasm. It catalyses the reaction L-histidine = trans-urocanate + NH4(+). It functions in the pathway amino-acid degradation; L-histidine degradation into L-glutamate; N-formimidoyl-L-glutamate from L-histidine: step 1/3. This Brucella canis (strain ATCC 23365 / NCTC 10854 / RM-666) protein is Histidine ammonia-lyase.